We begin with the raw amino-acid sequence, 263 residues long: Putative inactive caspase B (263 aa).

Positions 1–8 (MMCEDASD) are cleaved as a propeptide — removed in mature form by cps-1 or ced-3.

This sequence belongs to the peptidase C14A family. As to quaternary structure, interacts with ced-3 (via large subunit p17 or small subunit p13); the interaction inhibits ced-3 autoactivation. In terms of processing, cleavage by csp-1 isoform b or ced-3 removes the propeptide and generates subunit p31 in vitro. An additional cleavage at Asp-149 generates the 2 subunits p17 and p14 but this cleavage appears to be less efficient. Specifically expressed in the hermaphrodite germline.

It localises to the cytoplasm. Its function is as follows. Putative inactive caspase. In the germline, binds caspase ced-3 zymogen and prevents ced-3 autoactivation. Does not affect the caspase activity of mature ced-3 and ced-4-mediated mature ced-3 activation. Negatively regulates germline apoptosis by inhibiting autocleavage of caspase ced-3. Involved in fertility. Putative inactive caspase. Dispensable for the inhibition of germline apoptosis. The polypeptide is Putative inactive caspase B (Caenorhabditis elegans).